The sequence spans 368 residues: tRNA-specific 2-thiouridylase MnmA (368 aa).

ATP-binding positions include 11 to 18 (GMSGGVDS) and Met-37. The interval 97–99 (NPD) is interaction with target base in tRNA. Residue Cys-102 is the Nucleophile of the active site. Cys-102 and Cys-199 are oxidised to a cystine. An ATP-binding site is contributed by Gly-127. The interval 149-151 (KDQ) is interaction with tRNA. Cys-199 (cysteine persulfide intermediate) is an active-site residue. The interaction with tRNA stretch occupies residues 311-312 (RY).

The protein belongs to the MnmA/TRMU family. In terms of assembly, interacts with TusE.

It is found in the cytoplasm. The enzyme catalyses S-sulfanyl-L-cysteinyl-[protein] + uridine(34) in tRNA + AH2 + ATP = 2-thiouridine(34) in tRNA + L-cysteinyl-[protein] + A + AMP + diphosphate + H(+). Functionally, catalyzes the 2-thiolation of uridine at the wobble position (U34) of tRNA(Lys), tRNA(Glu) and tRNA(Gln), leading to the formation of s(2)U34, the first step of tRNA-mnm(5)s(2)U34 synthesis. Sulfur is provided by IscS, via a sulfur-relay system. Binds ATP and its substrate tRNAs. This is tRNA-specific 2-thiouridylase MnmA from Shigella dysenteriae serotype 1 (strain Sd197).